Consider the following 451-residue polypeptide: Phosphoglucosamine mutase (451 aa).

Residue serine 102 is the Phosphoserine intermediate of the active site. Residues serine 102, aspartate 243, aspartate 245, and aspartate 247 each coordinate Mg(2+). Serine 102 carries the post-translational modification Phosphoserine.

The protein belongs to the phosphohexose mutase family. Mg(2+) is required as a cofactor. In terms of processing, activated by phosphorylation.

It carries out the reaction alpha-D-glucosamine 1-phosphate = D-glucosamine 6-phosphate. Catalyzes the conversion of glucosamine-6-phosphate to glucosamine-1-phosphate. The polypeptide is Phosphoglucosamine mutase (Paramagnetospirillum magneticum (strain ATCC 700264 / AMB-1) (Magnetospirillum magneticum)).